Consider the following 254-residue polypeptide: 5-oxoprolinase subunit A (254 aa).

The protein belongs to the LamB/PxpA family. Forms a complex composed of PxpA, PxpB and PxpC.

It catalyses the reaction 5-oxo-L-proline + ATP + 2 H2O = L-glutamate + ADP + phosphate + H(+). In terms of biological role, catalyzes the cleavage of 5-oxoproline to form L-glutamate coupled to the hydrolysis of ATP to ADP and inorganic phosphate. This chain is 5-oxoprolinase subunit A, found in Rhodopseudomonas palustris (strain ATCC BAA-98 / CGA009).